A 189-amino-acid polypeptide reads, in one-letter code: Peptidyl-tRNA hydrolase (189 aa).

Tyrosine 14 serves as a coordination point for tRNA. Histidine 19 functions as the Proton acceptor in the catalytic mechanism. 3 residues coordinate tRNA: tyrosine 64, asparagine 66, and asparagine 112.

It belongs to the PTH family. In terms of assembly, monomer.

It localises to the cytoplasm. The enzyme catalyses an N-acyl-L-alpha-aminoacyl-tRNA + H2O = an N-acyl-L-amino acid + a tRNA + H(+). Its function is as follows. Hydrolyzes ribosome-free peptidyl-tRNAs (with 1 or more amino acids incorporated), which drop off the ribosome during protein synthesis, or as a result of ribosome stalling. Catalyzes the release of premature peptidyl moieties from peptidyl-tRNA molecules trapped in stalled 50S ribosomal subunits, and thus maintains levels of free tRNAs and 50S ribosomes. In Dehalococcoides mccartyi (strain ATCC BAA-2266 / KCTC 15142 / 195) (Dehalococcoides ethenogenes (strain 195)), this protein is Peptidyl-tRNA hydrolase.